Here is a 1617-residue protein sequence, read N- to C-terminus: Mitogen-activated protein kinase kinae kinase bck1 (1617 aa).

9 disordered regions span residues 1–73, 167–199, 211–253, 345–399, 455–555, 568–633, 739–820, 832–1144, and 1165–1277; these read MDGQ…SQLQ, GPVHHLYESSGGDGSAYKRDGTVPPTPSARTMP, SVAS…GGMS, RQIH…SPNL, DHRR…SSSY, KRSK…LRGK, GVPL…ISPE, EHKR…RGDI, and IDLD…EILR. Positions 19 to 28 are enriched in low complexity; it reads TQPSQSHMLS. The segment covering 44 to 60 has biased composition (pro residues); that stretch reads VMPPPPPGPPPGPPPGP. The segment covering 220–248 has biased composition (polar residues); the sequence is TAQNHQSQTGQTNEPTKSPSHRQNNSNTL. The segment covering 482–504 has biased composition (polar residues); it reads KSGSPATQHATLNQGLSSSSTGD. Over residues 524–533 the composition is skewed to basic and acidic residues; it reads RYYESRKGQE. Composition is skewed to polar residues over residues 535–555 and 586–596; these read IRPSPQEMCSRQWTGETSSSY and ESPTSPVNLRQ. Composition is skewed to basic and acidic residues over residues 832–841 and 871–885; these read EHKREVERKQ and FDERRVSPYEDKKAD. Composition is skewed to polar residues over residues 897–907 and 956–980; these read PQESYTLTRIN and GGKQTNFGSFGSPTQGNTKSAPQSS. 2 stretches are compositionally biased toward basic and acidic residues: residues 1128 to 1140 and 1189 to 1198; these read EDERPTPRRDSFA and PENDLHKKEN. Polar residues-rich tracts occupy residues 1199-1208 and 1257-1272; these read QPSSSYTGEM and NQASRSRSIHTGNQKS. Residues 1323–1596 enclose the Protein kinase domain; it reads IIRGQLIGKG…QTLLTRHPFC (274 aa). ATP-binding positions include 1329 to 1337 and Lys-1352; that span reads IGKGTYGRV.

Belongs to the protein kinase superfamily. STE Ser/Thr protein kinase family. MAP kinase kinase kinase subfamily.

The catalysed reaction is L-seryl-[protein] + ATP = O-phospho-L-seryl-[protein] + ADP + H(+). It catalyses the reaction L-threonyl-[protein] + ATP = O-phospho-L-threonyl-[protein] + ADP + H(+). Functionally, mitogen-activated protein kinase kinase kinase; part of cell wall integrity (CWI) signaling pathway composed of pkcA, the bck1-mkk2-mpka MAPK cascade and the downstream rlmA transcription regulator. The CWI signaling pathway regulates cell wall integrity and pyomelanin formation. CWI also controls oxidative stress response, gliotoxin production, iron adaptation and asexual development. Finally, CWI is constitutively required for A.fumigatus to cope with the temperature increase found in the mammalian lung environment, during infection. The chain is Mitogen-activated protein kinase kinae kinase bck1 from Aspergillus fumigatus (strain ATCC MYA-4609 / CBS 101355 / FGSC A1100 / Af293) (Neosartorya fumigata).